Here is a 316-residue protein sequence, read N- to C-terminus: L-lactate dehydrogenase (316 aa).

NAD(+)-binding positions include valine 15, aspartate 37, lysine 42, tyrosine 68, and 82 to 83 (GL). Substrate is bound by residues glutamine 85, arginine 91, and 123 to 126 (NPVD). NAD(+)-binding positions include 121–123 (ASN) and threonine 146. Position 151–154 (151–154 (DTSR)) interacts with substrate. Beta-D-fructose 1,6-bisphosphate is bound by residues arginine 156 and histidine 171. The active-site Proton acceptor is the histidine 178. Tyrosine 222 carries the phosphotyrosine modification. Substrate is bound at residue threonine 231.

The protein belongs to the LDH/MDH superfamily. LDH family. As to quaternary structure, homotetramer.

It is found in the cytoplasm. The enzyme catalyses (S)-lactate + NAD(+) = pyruvate + NADH + H(+). Its pathway is fermentation; pyruvate fermentation to lactate; (S)-lactate from pyruvate: step 1/1. With respect to regulation, allosterically activated by fructose 1,6-bisphosphate (FBP). Catalyzes the conversion of lactate to pyruvate. This is L-lactate dehydrogenase from Borreliella afzelii (strain PKo) (Borrelia afzelii).